The chain runs to 373 residues: PqqA peptide cyclase (373 aa).

A Radical SAM core domain is found at isoleucine 7–aspartate 227. The [4Fe-4S] cluster site is built by cysteine 21, cysteine 25, and cysteine 28.

Belongs to the radical SAM superfamily. PqqE family. As to quaternary structure, interacts with PqqD. The interaction is necessary for activity of PqqE. [4Fe-4S] cluster is required as a cofactor.

It catalyses the reaction [PQQ precursor protein] + S-adenosyl-L-methionine = E-Y cross-linked-[PQQ precursor protein] + 5'-deoxyadenosine + L-methionine + H(+). Its pathway is cofactor biosynthesis; pyrroloquinoline quinone biosynthesis. Catalyzes the cross-linking of a glutamate residue and a tyrosine residue in the PqqA protein as part of the biosynthesis of pyrroloquinoline quinone (PQQ). This Methylocella silvestris (strain DSM 15510 / CIP 108128 / LMG 27833 / NCIMB 13906 / BL2) protein is PqqA peptide cyclase.